Consider the following 1436-residue polypeptide: Probable ATP-dependent RNA helicase spindle-E (1436 aa).

The Helicase ATP-binding domain maps to 124-291; it reads LAAINANPVV…FTTTNSIPPV (168 aa). 137 to 144 lines the ATP pocket; that stretch reads GETGCGKT. The DEAH box signature appears at 237–240; that stretch reads DEVH. In terms of domain architecture, Helicase C-terminal spans 337 to 524; the sequence is KIIMVIDNME…NSVLRAKELE (188 aa). Positions 940 to 1003 constitute a Tudor domain; it reads ACDISKGMMV…RFMSEELIQQ (64 aa).

Belongs to the DEAD box helicase family. DEAH subfamily.

It is found in the cytoplasm. It carries out the reaction ATP + H2O = ADP + phosphate + H(+). Probable ATP-binding RNA helicase which plays a central role during spermatogenesis and oogenesis by repressing transposable elements and preventing their mobilization, which is essential for the germline integrity. Acts via the piRNA metabolic process, which mediates the repression of transposable elements during meiosis by forming complexes composed of piRNAs and Piwi and govern the methylation and subsequent repression of transposons. Involved in the repression of LTR retrotransposon copia. Also involved in telomere regulation by repressing specialized telomeric retroelements HeT-A, TAHRE, and TART; Drosophila telomeres being maintained by transposition of specialized telomeric retroelements. Involved in telomeric trans-silencing, a repression mechanism by which a transposon or a transgene inserted in subtelomeric heterochromatin has the capacity to repress in trans in the female germline, a homologous transposon, or transgene located in euchromatin. Involved in the repression of testis-expressed Stellate genes by the homologous Su(Ste) repeats. Required for anteroposterior and dorsoventral axis formation during oogenesis. The polypeptide is Probable ATP-dependent RNA helicase spindle-E (spn-E) (Drosophila yakuba (Fruit fly)).